A 146-amino-acid chain; its full sequence is Protein archease (146 aa).

Ca(2+)-binding residues include aspartate 16, aspartate 145, and isoleucine 146.

The protein belongs to the archease family.

Its function is as follows. Activates the tRNA-splicing ligase complex by facilitating the enzymatic turnover of catalytic subunit RtcB. Acts by promoting the guanylylation of RtcB, a key intermediate step in tRNA ligation. Can also alter the NTP specificity of RtcB such that ATP, dGTP or ITP is used efficiently. In Methanosarcina mazei (strain ATCC BAA-159 / DSM 3647 / Goe1 / Go1 / JCM 11833 / OCM 88) (Methanosarcina frisia), this protein is Protein archease.